We begin with the raw amino-acid sequence, 404 residues long: Cysteine desulfurase IscS (404 aa).

Residues alanine 75–threonine 76, asparagine 155, glutamine 183, and serine 203–histidine 205 contribute to the pyridoxal 5'-phosphate site. Lysine 206 is modified (N6-(pyridoxal phosphate)lysine). Pyridoxal 5'-phosphate is bound at residue threonine 243. Cysteine 328 serves as the catalytic Cysteine persulfide intermediate. Cysteine 328 is a [2Fe-2S] cluster binding site.

Belongs to the class-V pyridoxal-phosphate-dependent aminotransferase family. NifS/IscS subfamily. Homodimer. Forms a heterotetramer with IscU, interacts with other sulfur acceptors. Pyridoxal 5'-phosphate is required as a cofactor.

The protein localises to the cytoplasm. The enzyme catalyses (sulfur carrier)-H + L-cysteine = (sulfur carrier)-SH + L-alanine. It functions in the pathway cofactor biosynthesis; iron-sulfur cluster biosynthesis. Its function is as follows. Master enzyme that delivers sulfur to a number of partners involved in Fe-S cluster assembly, tRNA modification or cofactor biosynthesis. Catalyzes the removal of elemental sulfur atoms from cysteine to produce alanine. Functions as a sulfur delivery protein for Fe-S cluster synthesis onto IscU, an Fe-S scaffold assembly protein, as well as other S acceptor proteins. This chain is Cysteine desulfurase IscS, found in Shewanella halifaxensis (strain HAW-EB4).